The primary structure comprises 369 residues: Serpentine receptor class epsilon-45 (369 aa).

The next 8 membrane-spanning stretches (helical) occupy residues 1–21, 39–59, 67–87, 127–147, 169–191, 195–217, 258–278, and 291–311; these read MIFLIGNSTSNYTVCFPIFIL, FVLTFVSFYYVIKCCYVAIHI, TVLLIILMIQWFEGLLSNILI, FFLGGFLKWHYILSMITTLLV, GLFFMLVVGQTSTNLVMGYLFFF, HFAVGFSIILSTNIIAMGIFTYV, VIHAGLFLILTACFVNLFMYL, and IFESAINLNPVVIVPTLLGSV.

This sequence belongs to the nematode receptor-like protein sre family.

The protein resides in the membrane. The polypeptide is Serpentine receptor class epsilon-45 (sre-45) (Caenorhabditis elegans).